A 591-amino-acid chain; its full sequence is Aspartate--tRNA(Asp/Asn) ligase (591 aa).

Glutamate 174 contacts L-aspartate. Residues 198-201 (QLFK) are aspartate. L-aspartate is bound at residue arginine 220. ATP is bound by residues 220 to 222 (RDE) and glutamine 229. Histidine 450 is an L-aspartate binding site. Glutamate 483 contributes to the ATP binding site. Position 490 (arginine 490) interacts with L-aspartate. An ATP-binding site is contributed by 535–538 (GLDR).

The protein belongs to the class-II aminoacyl-tRNA synthetase family. Type 1 subfamily. Homodimer.

It is found in the cytoplasm. It carries out the reaction tRNA(Asx) + L-aspartate + ATP = L-aspartyl-tRNA(Asx) + AMP + diphosphate. Aspartyl-tRNA synthetase with relaxed tRNA specificity since it is able to aspartylate not only its cognate tRNA(Asp) but also tRNA(Asn). Reaction proceeds in two steps: L-aspartate is first activated by ATP to form Asp-AMP and then transferred to the acceptor end of tRNA(Asp/Asn). The protein is Aspartate--tRNA(Asp/Asn) ligase of Pseudomonas syringae pv. tomato (strain ATCC BAA-871 / DC3000).